Here is a 207-residue protein sequence, read N- to C-terminus: Urease accessory protein UreG (207 aa).

Residue Gly-16–Thr-23 participates in GTP binding.

It belongs to the SIMIBI class G3E GTPase family. UreG subfamily. As to quaternary structure, homodimer. UreD, UreF and UreG form a complex that acts as a GTP-hydrolysis-dependent molecular chaperone, activating the urease apoprotein by helping to assemble the nickel containing metallocenter of UreC. The UreE protein probably delivers the nickel.

Its subcellular location is the cytoplasm. Its function is as follows. Facilitates the functional incorporation of the urease nickel metallocenter. This process requires GTP hydrolysis, probably effectuated by UreG. This is Urease accessory protein UreG from Cupriavidus metallidurans (strain ATCC 43123 / DSM 2839 / NBRC 102507 / CH34) (Ralstonia metallidurans).